Consider the following 327-residue polypeptide: DNA-directed RNA polymerase subunit alpha (327 aa).

The interval 1–231 (MIYQMQMPAK…DHIMYFANFS (231 aa)) is alpha N-terminal domain (alpha-NTD). The segment at 247–327 (DEFESMRKLL…GMDITRYQMK (81 aa)) is alpha C-terminal domain (alpha-CTD).

Belongs to the RNA polymerase alpha chain family. Homodimer. The RNAP catalytic core consists of 2 alpha, 1 beta, 1 beta' and 1 omega subunit. When a sigma factor is associated with the core the holoenzyme is formed, which can initiate transcription.

The enzyme catalyses RNA(n) + a ribonucleoside 5'-triphosphate = RNA(n+1) + diphosphate. Functionally, DNA-dependent RNA polymerase catalyzes the transcription of DNA into RNA using the four ribonucleoside triphosphates as substrates. The chain is DNA-directed RNA polymerase subunit alpha from Chlorobium phaeobacteroides (strain DSM 266 / SMG 266 / 2430).